We begin with the raw amino-acid sequence, 590 residues long: Arginine--tRNA ligase (590 aa).

The short motif at 130 to 140 is the 'HIGH' region element; the sequence is PNIAKEMHVGH.

Belongs to the class-I aminoacyl-tRNA synthetase family. Monomer.

It is found in the cytoplasm. The enzyme catalyses tRNA(Arg) + L-arginine + ATP = L-arginyl-tRNA(Arg) + AMP + diphosphate. In Synechococcus sp. (strain CC9605), this protein is Arginine--tRNA ligase.